A 525-amino-acid chain; its full sequence is Acyl-lipid (9-3)-desaturase (525 aa).

Positions 102–176 (KSTHPLSEVA…LQDFYIGDVE (75 aa)) constitute a Cytochrome b5 heme-binding domain. Heme-binding residues include His137 and His159. A helical membrane pass occupies residues 216-236 (VAIFAASIAIICWSKTISAVL). A Histidine box-1 motif is present at residues 254 to 258 (HDFLH). The chain crosses the membrane as a helical span at residues 266–286 (WLNEVVGYVIGNAVLGFSTGW). The Histidine box-2 signature appears at 291–295 (HNLHH). 3 consecutive transmembrane segments (helical) span residues 340–360 (QHLF…FWSW), 378–398 (GTVL…LPGW), and 401–421 (LVWM…VFVL). Residues 462–466 (QIEHH) carry the Histidine box-3 motif.

This sequence belongs to the fatty acid desaturase type 1 family.

The protein resides in the membrane. The enzyme catalyses (9Z,12Z,15Z)-octadecatrienoyl-containing glycerolipid + 2 Fe(II)-[cytochrome b5] + O2 + 2 H(+) = (6Z,9Z,12Z,15Z)-octadecatetraenoyl-containing glycerolipid + 2 Fe(III)-[cytochrome b5] + 2 H2O. It carries out the reaction a (9Z,12Z)-octadecadienoyl-containing glycerolipid + 2 Fe(II)-[cytochrome b5] + O2 + 2 H(+) = (6Z,9Z,12Z)-octadecatrienoyl-containing glycerolipid + 2 Fe(III)-[cytochrome b5] + 2 H2O. Its pathway is lipid metabolism; polyunsaturated fatty acid biosynthesis. Fatty acid desaturase able to introduce a delta(6)-double bond into delta(9)-unsaturated fatty-acid substrates. Can use both linoleic acid (18:2(9Z,12Z)) and alpha-linolenic acid (18:3(9Z,12Z,15Z)) as substrates. Required for the biosynthesis of arachidonic acid (20:4(5z,8Z,11Z,14Z)). The chain is Acyl-lipid (9-3)-desaturase from Physcomitrium patens (Spreading-leaved earth moss).